A 25-amino-acid chain; its full sequence is Ocellatin-F1 (25 aa).

L25 bears the Leucine amide mark.

Belongs to the frog skin active peptide (FSAP) family. Ocellatin subfamily. As to expression, expressed by the skin glands.

The protein resides in the secreted. Functionally, antibacterial peptide that inhibits reference strains of both Gram-negative bacteria (E.coli, P.aeruginosa, E.cloacae, K.pneumoniae, and A.actinomycetemcomitans) and Gram-positive bacteria (S.aureus) with relatively low potencies (MIC=25-400 uM). Shows antifungal activity against C.lusitaniae (MIC=50.25 uM), but no activity against C.albicans. In the presence of an alkaloid (bufotenine), inhibits cellular infection by the rabies virus. The peptide shows very low hemolytic activity against rabbit erythrocytes. The low amphipathicity of alpha-helices demonstrated by wheel projection as well as the low cationicity may explain the low antibacterial and hemolytic potencies. This is Ocellatin-F1 from Leptodactylus labyrinthicus (Labyrinth frog).